Here is a 384-residue protein sequence, read N- to C-terminus: MGLLCSRNRRYNDADAEENAQAAEIERRIELETKAEKHIQKLLLLGAGESGKSTIFKQIKLLFQTGFDEAELKSYLPVIHANVFQTIKLLHDGSKELAQNDVDSSKYVISDENKDIGEKLSEIGSKLDYPYLTTELAKEIETLWEDAAIQETYARGNELQVPGCAHYFMENLQRLSDANYVPTKEDVLYARVRTTGVVEIQFSPVGENKRSGEVYRLFDVGGQRNERRKWIHLFEGVSAVIFCAAISEYDQTLFEDENKNRMTETKELFEWILKQPCFEKTSFMLFLNKFDIFEKKILKVPLNVCEWFKDYQPVSTGKQEIEHAYEFVKKKFEELYFQSTAPERVDRVFKVYRTTALDQKLIKKTFKLVDESLRRRNLFEAGLL.

Gly-2 carries N-myristoyl glycine lipidation. A lipid anchor (S-palmitoyl cysteine) is attached at Cys-5. A G-alpha domain is found at 38–384; sequence HIQKLLLLGA…RRNLFEAGLL (347 aa). The G1 motif stretch occupies residues 41 to 54; sequence KLLLLGAGESGKST. 14 residues coordinate GTP: Glu-49, Ser-50, Gly-51, Lys-52, Ser-53, Thr-54, Leu-188, Tyr-189, Thr-194, Gly-222, Asn-288, Lys-289, Asp-291, and Ala-356. Mg(2+) is bound at residue Ser-53. A G2 motif region spans residues 186-194; it reads DVLYARVRT. A Mg(2+)-binding site is contributed by Thr-194. The interval 215–224 is G3 motif; sequence YRLFDVGGQR. The segment at 284 to 291 is G4 motif; sequence MLFLNKFD. A G5 motif region spans residues 354-359; sequence TTALDQ.

The protein belongs to the G-alpha family. As to quaternary structure, g proteins are composed of 3 units; alpha, beta and gamma. The alpha chain contains the guanine nucleotide binding site. Requires Mg(2+) as cofactor.

Guanine nucleotide-binding proteins (G proteins) are involved as modulators or transducers in various transmembrane signaling systems. This Lupinus luteus (European yellow lupine) protein is Guanine nucleotide-binding protein alpha-1 subunit (GPA1).